The chain runs to 438 residues: CBL-interacting protein kinase 32 (438 aa).

Residues 13-268 (YELGRTIGEG…IPEILEDEWF (256 aa)) enclose the Protein kinase domain. Residues 19-27 (IGEGTFAKV) and K42 each bind ATP. Catalysis depends on D136, which acts as the Proton acceptor. The activation loop stretch occupies residues 154 to 183 (DFGLSALSQQIKDDGLLHTTCGTPNYVAPE). Residues 305-329 (EEPEALNAFELISMSAGLNLGNLFD) enclose the NAF domain. The tract at residues 335-364 (KRETRFTSKCPPKEIVRKIEEAAKPLGFDV) is PPI.

Belongs to the protein kinase superfamily. CAMK Ser/Thr protein kinase family. SNF1 subfamily. The cofactor is Mn(2+).

The enzyme catalyses L-seryl-[protein] + ATP = O-phospho-L-seryl-[protein] + ADP + H(+). It catalyses the reaction L-threonyl-[protein] + ATP = O-phospho-L-threonyl-[protein] + ADP + H(+). Functionally, CIPK serine-threonine protein kinases interact with CBL proteins. Binding of a CBL protein to the regulatory NAF domain of CIPK protein lead to the activation of the kinase in a calcium-dependent manner. This chain is CBL-interacting protein kinase 32 (CIPK32), found in Oryza sativa subsp. japonica (Rice).